A 129-amino-acid polypeptide reads, in one-letter code: Small ribosomal subunit protein uS11 (129 aa).

Belongs to the universal ribosomal protein uS11 family. As to quaternary structure, part of the 30S ribosomal subunit. Interacts with proteins S7 and S18. Binds to IF-3.

In terms of biological role, located on the platform of the 30S subunit, it bridges several disparate RNA helices of the 16S rRNA. Forms part of the Shine-Dalgarno cleft in the 70S ribosome. The protein is Small ribosomal subunit protein uS11 of Pelotomaculum thermopropionicum (strain DSM 13744 / JCM 10971 / SI).